The following is a 249-amino-acid chain: Small ribosomal subunit protein uS2 (249 aa).

It belongs to the universal ribosomal protein uS2 family.

The chain is Small ribosomal subunit protein uS2 from Listeria innocua serovar 6a (strain ATCC BAA-680 / CLIP 11262).